We begin with the raw amino-acid sequence, 345 residues long: Transcription factor 19 (345 aa).

The FHA domain maps to 31-88 (YRLGHRADLCDVALRPQQEPGLISGIHAELHAEPRGDDWRVSLEDHSSQGTLVNNVRL). Residue Ser78 is modified to Phosphoserine. Disordered stretches follow at residues 147–167 (AGFR…STLS) and 190–227 (LTFS…RKSV). The PHD-type zinc finger occupies 293–342 (AAPCCCLPQEETVAWVQCDGCDVWFHVACVGCSIQAAREADFRCPGCRAG). 8 residues coordinate Zn(2+): Cys296, Cys298, Cys310, Cys313, His318, Cys321, Cys336, and Cys339.

Its subcellular location is the nucleus. In terms of biological role, potential transcription factor that may play a role in the regulation of genes involved in cell cycle G1/S transition. May bind to regulatory elements of genes, including the promoter of the transcription factor FOXO1. This chain is Transcription factor 19 (TCF19), found in Pan troglodytes (Chimpanzee).